The sequence spans 66 residues: Large ribosomal subunit protein bL35 (66 aa).

Belongs to the bacterial ribosomal protein bL35 family.

The chain is Large ribosomal subunit protein bL35 from Borrelia garinii subsp. bavariensis (strain ATCC BAA-2496 / DSM 23469 / PBi) (Borreliella bavariensis).